We begin with the raw amino-acid sequence, 313 residues long: Pyrimidine-specific ribonucleoside hydrolase RihA (313 aa).

Residue H240 is part of the active site.

This sequence belongs to the IUNH family. RihA subfamily.

In terms of biological role, hydrolyzes cytidine or uridine to ribose and cytosine or uracil, respectively. The polypeptide is Pyrimidine-specific ribonucleoside hydrolase RihA (Enterobacter sp. (strain 638)).